The sequence spans 308 residues: Protein translocase subunit SecF (308 aa).

Transmembrane regions (helical) follow at residues 14–34 (FFLL…LFGF), 134–154 (VYAV…RFEF), 158–178 (ISGI…FALL), 185–205 (TFVA…IVIF), 238–258 (SIRT…FGGI), and 267–287 (LIIG…PIWV).

It belongs to the SecD/SecF family. SecF subfamily. As to quaternary structure, forms a complex with SecD. Part of the essential Sec protein translocation apparatus which comprises SecA, SecYEG and auxiliary proteins SecDF. Other proteins may also be involved.

The protein localises to the cell membrane. Part of the Sec protein translocase complex. Interacts with the SecYEG preprotein conducting channel. SecDF uses the proton motive force (PMF) to complete protein translocation after the ATP-dependent function of SecA. The sequence is that of Protein translocase subunit SecF from Alicyclobacillus acidocaldarius subsp. acidocaldarius (strain ATCC 27009 / DSM 446 / BCRC 14685 / JCM 5260 / KCTC 1825 / NBRC 15652 / NCIMB 11725 / NRRL B-14509 / 104-IA) (Bacillus acidocaldarius).